Here is a 417-residue protein sequence, read N- to C-terminus: Squamosa promoter-binding-like protein 14 (417 aa).

Gly residues-rich tracts occupy residues 1 to 26 (MEMASGGGAAAAAGGGVGGSGGGGGG) and 51 to 60 (AGGGGTGSGS). Disordered regions lie at residues 1-32 (MEMASGGGAAAAAGGGVGGSGGGGGGGDEHRQ) and 51-102 (AGGG…PPPP). Low complexity predominate over residues 61–74 (GSASAAPPSSSSKA). Gly residues predominate over residues 75-84 (AGGGRGGGGK). The SBP-type zinc-finger motif lies at 101–178 (PPRCQVEGCG…AGHNERRRRP (78 aa)). The Zn(2+) site is built by cysteine 104, cysteine 109, cysteine 126, histidine 129, cysteine 145, cysteine 148, and histidine 152. The Bipartite nuclear localization signal signature appears at 161 to 177 (KRSCRRRLAGHNERRRR). Residue serine 163 is modified to Phosphoserine. Cysteine 164 contributes to the Zn(2+) binding site. The tract at residues 387–417 (LQGNGPAPAPRIDPGSGSTFDQTSNTMDWSL) is disordered. Residues 402–417 (SGSTFDQTSNTMDWSL) are compositionally biased toward polar residues.

Interacts with PCF1 and PCF2. Interacts with IPI1. Interacts with D53. Interacts with SLR1. Interacts (via C-terminus) with SHI1. In terms of processing, phosphorylated at Ser-163 in response to infection by the fungal pathogen Magnaporthe oryzae. Ubiquitinated by IPI1, which leads to proteasomal degradation. Expressed in young panicles. Expressed in the shoot apex at both the vegetative and reproductive stages. Highly expressed in the promordia of primary and secondary branches. Highly expressed in young panicles.

The protein resides in the nucleus. Transcriptional activator that binds to the SBP-box DNA core binding motif 5'-GTAC-3'. Can target the TCP motif 5'-TGGGCC/T-3' through interaction with PCF1 and PCF2. Key regulator of the plant architecture that controls shoot branching and panicle development. Promotes panicle branching. Promotes high grain yield. Binds to the promoters of TB1 and DEP1. Suppresses rice tillering mainly through positive regulation of TB1. Regulates plant height and panicle length through positive regulation of DEP1. Repressed by D53 in strigolactone (SL) signaling. Acts with D53 to mediate the SL-regulated tiller development. Functions as a direct downstream component of D53 in regulating tiller number and SL-induced gene expression. Binds directly to the D53 promoter and plays a critical role in the negative feedback regulation of SL-induced D53 expression. Involved in defense response against pathogens. Phosphorylated at Ser-163 in response to infection by the fungal pathogen Magnaporthe oryzae. Phosphorylation reduces SPL14/IPA1 binding to the GTAC site in the DEP1 promoter and enhances binding to the TGGGCC site in the WRKY45 promoter. Binding to the promoter of the pathogen defense gene WRKY45 activates its expression, leading to enhanced disease resistance. Reduces gibberellin-mediated disease susceptibility by stabilizing SLR1. Possesses transactivation activity in yeast cells. This Oryza sativa subsp. japonica (Rice) protein is Squamosa promoter-binding-like protein 14.